A 166-amino-acid polypeptide reads, in one-letter code: Ferric nitrobindin-like protein (166 aa).

The GXWXGXG signature appears at 21–27; sequence GHWEGEG.

This sequence belongs to the nitrobindin family.

The chain is Ferric nitrobindin-like protein from Cutibacterium acnes (strain DSM 16379 / KPA171202) (Propionibacterium acnes).